We begin with the raw amino-acid sequence, 349 residues long: Isopentenyl-diphosphate delta-isomerase (349 aa).

9-10 lines the substrate pocket; the sequence is RK. FMN-binding positions include 65–67, S95, and N124; that span reads AMT. 95–97 is a binding site for substrate; the sequence is STH. Position 154 (Q154) interacts with substrate. E155 contacts Mg(2+). FMN is bound by residues K186, S211, T216, 262-264, and 283-284; these read GVR and SR.

This sequence belongs to the IPP isomerase type 2 family. In terms of assembly, homooctamer. Dimer of tetramers. The cofactor is FMN. NADPH serves as cofactor. Mg(2+) is required as a cofactor.

It is found in the cytoplasm. It catalyses the reaction isopentenyl diphosphate = dimethylallyl diphosphate. In terms of biological role, involved in the biosynthesis of isoprenoids. Catalyzes the 1,3-allylic rearrangement of the homoallylic substrate isopentenyl (IPP) to its allylic isomer, dimethylallyl diphosphate (DMAPP). The protein is Isopentenyl-diphosphate delta-isomerase of Staphylococcus haemolyticus (strain JCSC1435).